The chain runs to 315 residues: Lipoyl synthase (315 aa).

Residues Cys-63, Cys-68, Cys-74, Cys-89, Cys-93, Cys-96, and Ser-303 each contribute to the [4Fe-4S] cluster site. Residues 75-292 form the Radical SAM core domain; that stretch reads FSKGTATFMI…EEKAYEMGFV (218 aa).

The protein belongs to the radical SAM superfamily. Lipoyl synthase family. [4Fe-4S] cluster is required as a cofactor.

It localises to the cytoplasm. It catalyses the reaction [[Fe-S] cluster scaffold protein carrying a second [4Fe-4S](2+) cluster] + N(6)-octanoyl-L-lysyl-[protein] + 2 oxidized [2Fe-2S]-[ferredoxin] + 2 S-adenosyl-L-methionine + 4 H(+) = [[Fe-S] cluster scaffold protein] + N(6)-[(R)-dihydrolipoyl]-L-lysyl-[protein] + 4 Fe(3+) + 2 hydrogen sulfide + 2 5'-deoxyadenosine + 2 L-methionine + 2 reduced [2Fe-2S]-[ferredoxin]. The protein operates within protein modification; protein lipoylation via endogenous pathway; protein N(6)-(lipoyl)lysine from octanoyl-[acyl-carrier-protein]: step 2/2. In terms of biological role, catalyzes the radical-mediated insertion of two sulfur atoms into the C-6 and C-8 positions of the octanoyl moiety bound to the lipoyl domains of lipoate-dependent enzymes, thereby converting the octanoylated domains into lipoylated derivatives. The polypeptide is Lipoyl synthase (Chromobacterium violaceum (strain ATCC 12472 / DSM 30191 / JCM 1249 / CCUG 213 / NBRC 12614 / NCIMB 9131 / NCTC 9757 / MK)).